Reading from the N-terminus, the 511-residue chain is Transcription factor bHLH28 (511 aa).

The 50-residue stretch at 339–388 (DKPLNHVEAERMRREKLNHRFYALRAVVPNVSKMDKTSLLEDAVCYINEL) folds into the bHLH domain.

In terms of assembly, homodimer.

It localises to the nucleus. In Arabidopsis thaliana (Mouse-ear cress), this protein is Transcription factor bHLH28 (BHLH28).